Reading from the N-terminus, the 205-residue chain is GTP cyclohydrolase-2 (205 aa).

49-53 (RIHSE) provides a ligand contact to GTP. The Zn(2+) site is built by cysteine 54, cysteine 65, and cysteine 67. Residues glutamine 70, 92–94 (EGR), and threonine 114 contribute to the GTP site. Catalysis depends on aspartate 126, which acts as the Proton acceptor. Catalysis depends on arginine 128, which acts as the Nucleophile. GTP is bound by residues threonine 149 and lysine 154.

This sequence belongs to the GTP cyclohydrolase II family. Zn(2+) is required as a cofactor.

The enzyme catalyses GTP + 4 H2O = 2,5-diamino-6-hydroxy-4-(5-phosphoribosylamino)-pyrimidine + formate + 2 phosphate + 3 H(+). The protein operates within cofactor biosynthesis; riboflavin biosynthesis; 5-amino-6-(D-ribitylamino)uracil from GTP: step 1/4. In terms of biological role, catalyzes the conversion of GTP to 2,5-diamino-6-ribosylamino-4(3H)-pyrimidinone 5'-phosphate (DARP), formate and pyrophosphate. This is GTP cyclohydrolase-2 from Shewanella woodyi (strain ATCC 51908 / MS32).